Here is a 351-residue protein sequence, read N- to C-terminus: Serine/threonine-protein kinase mos (351 aa).

The Protein kinase domain maps to 71–340 (FSIDGVIGSG…ERRTDDTENL (270 aa)). ATP is bound by residues 77–85 (IGSGGFGSV) and lysine 98. Aspartate 194 functions as the Proton acceptor in the catalytic mechanism.

Belongs to the protein kinase superfamily. Ser/Thr protein kinase family.

It catalyses the reaction L-seryl-[protein] + ATP = O-phospho-L-seryl-[protein] + ADP + H(+). The catalysed reaction is L-threonyl-[protein] + ATP = O-phospho-L-threonyl-[protein] + ADP + H(+). Its function is as follows. Suppresses the mitotic cell cycle in oocytes, forcing them to undergo meiosis II to produce haploid gametes. Acts as a MAPK kinase kinase (MAP3K) that acts upstream of MAP kinase in oocytes. This Patiria pectinifera (Starfish) protein is Serine/threonine-protein kinase mos.